A 362-amino-acid polypeptide reads, in one-letter code: Acyl-CoA-binding domain-containing protein 3 (362 aa).

An N-terminal signal peptide occupies residues 1-22 (MEVFLEMLLTAVVALLFSFLLA). 2 disordered regions span residues 132 to 151 (QDEQ…SPEN) and 193 to 214 (VEKS…EKTE). The stretch at 192–221 (RVEKSSNMVEESDAEAENEEKTELTIEEDD) forms a coiled coil. Residues 231-318 (LEKAFAAAVN…VSKEIPGLTK (88 aa)) form the ACB domain. Residues 260–264 (FGLHK), K286, and Y305 each bind an acyl-CoA. Positions 329–362 (METSVGLPPNSGSLEDPTNLVTTGVDESSKNGIP) are disordered.

This sequence belongs to the ACBP family. As to expression, expressed in roots, stems, leaves, flowers and siliques.

The protein localises to the secreted. Its subcellular location is the extracellular space. Functionally, binds medium- and long-chain acyl-CoA esters with very high affinity. Can interact in vitro with arachidonyl-CoA, barely with oleoyl-CoA, but not with palmitoyl-CoA. This chain is Acyl-CoA-binding domain-containing protein 3 (ACBP3), found in Arabidopsis thaliana (Mouse-ear cress).